The following is a 749-amino-acid chain: Catalase-peroxidase 2 (749 aa).

The signal sequence occupies residues 1-27; the sequence is MFKRTIPLFAAFTLAISPSIFPNYAHA. Residues 107–229 constitute a cross-link (tryptophyl-tyrosyl-methioninium (Trp-Tyr) (with M-255)); sequence WHAAGTYRIY…LAATVMGLIY (123 aa). His108 acts as the Proton acceptor in catalysis. Positions 229-255 form a cross-link, tryptophyl-tyrosyl-methioninium (Tyr-Met) (with W-107); the sequence is YVNPEGPNGVPDPLAAAEKIRETFGRM. His270 is a binding site for heme b.

This sequence belongs to the peroxidase family. Peroxidase/catalase subfamily. Homodimer or homotetramer. Heme b is required as a cofactor. Post-translationally, formation of the three residue Trp-Tyr-Met cross-link is important for the catalase, but not the peroxidase activity of the enzyme.

The catalysed reaction is H2O2 + AH2 = A + 2 H2O. It carries out the reaction 2 H2O2 = O2 + 2 H2O. Functionally, bifunctional enzyme with both catalase and broad-spectrum peroxidase activity. The polypeptide is Catalase-peroxidase 2 (Legionella pneumophila subsp. pneumophila (strain Philadelphia 1 / ATCC 33152 / DSM 7513)).